We begin with the raw amino-acid sequence, 337 residues long: Putative 4-hydroxythreonine-4-phosphate dehydrogenase (337 aa).

A divalent metal cation is bound by residues His172, His216, and His271.

Belongs to the PdxA family. Homodimer. Zn(2+) is required as a cofactor. Requires Mg(2+) as cofactor. The cofactor is Co(2+).

The protein localises to the cytoplasm. The enzyme catalyses 4-(phosphooxy)-L-threonine + NAD(+) = 3-amino-2-oxopropyl phosphate + CO2 + NADH. It functions in the pathway cofactor biosynthesis; pyridoxine 5'-phosphate biosynthesis; pyridoxine 5'-phosphate from D-erythrose 4-phosphate: step 4/5. Catalyzes the NAD(P)-dependent oxidation of 4-(phosphooxy)-L-threonine (HTP) into 2-amino-3-oxo-4-(phosphooxy)butyric acid which spontaneously decarboxylates to form 3-amino-2-oxopropyl phosphate (AHAP). This Pasteurella multocida (strain Pm70) protein is Putative 4-hydroxythreonine-4-phosphate dehydrogenase.